Reading from the N-terminus, the 356-residue chain is Ferrochelatase (356 aa).

2 residues coordinate Fe cation: histidine 214 and glutamate 295.

Belongs to the ferrochelatase family.

The protein localises to the cytoplasm. The enzyme catalyses heme b + 2 H(+) = protoporphyrin IX + Fe(2+). It participates in porphyrin-containing compound metabolism; protoheme biosynthesis; protoheme from protoporphyrin-IX: step 1/1. Catalyzes the ferrous insertion into protoporphyrin IX. This chain is Ferrochelatase, found in Paraburkholderia phymatum (strain DSM 17167 / CIP 108236 / LMG 21445 / STM815) (Burkholderia phymatum).